The chain runs to 164 residues: Phosphopantetheine adenylyltransferase (164 aa).

S9 lines the substrate pocket. Residues 9-10 (SF) and H17 each bind ATP. Substrate contacts are provided by K41, L73, and K87. ATP contacts are provided by residues 88–90 (GLR), E98, and 123–129 (YSYLSSS).

It belongs to the bacterial CoaD family. Homohexamer. Requires Mg(2+) as cofactor.

The protein localises to the cytoplasm. The enzyme catalyses (R)-4'-phosphopantetheine + ATP + H(+) = 3'-dephospho-CoA + diphosphate. The protein operates within cofactor biosynthesis; coenzyme A biosynthesis; CoA from (R)-pantothenate: step 4/5. In terms of biological role, reversibly transfers an adenylyl group from ATP to 4'-phosphopantetheine, yielding dephospho-CoA (dPCoA) and pyrophosphate. The protein is Phosphopantetheine adenylyltransferase of Clostridium botulinum (strain 657 / Type Ba4).